The chain runs to 846 residues: Disks large-associated protein 5 (846 aa).

The residue at position 67 (S67) is a Phosphoserine; by CDK1. Positions R90–V120 form a coiled coil. The tract at residues T153–D284 is disordered. 2 stretches are compositionally biased toward basic and acidic residues: residues K156–A174 and T182–V194. Residue S202 is modified to Phosphoserine. Over residues L203 to A225 the composition is skewed to polar residues. The segment covering K250–S266 has biased composition (basic and acidic residues). The span at N269–M281 shows a compositional bias: polar residues. Phosphothreonine is present on T326. Residue T329 is modified to Phosphothreonine; by CDK1. T338 carries the phosphothreonine modification. A Glycyl lysine isopeptide (Lys-Gly) (interchain with G-Cter in SUMO2) cross-link involves residue K347. T401 and T402 each carry phosphothreonine; by CDK1. S618 bears the Phosphoserine; by CDK1 mark. S627 bears the Phosphoserine; by AURKA mark. A compositionally biased stretch (polar residues) spans V628–T671. Residues V628 to E674 are disordered. Residues S629 and S634 each carry the phosphoserine modification. Position 639 is a phosphothreonine; by CDK1 (T639). A Phosphoserine; by CDK1 modification is found at S642. Position 662 is a phosphoserine (S662). A phosphoserine; by AURKA mark is found at S725 and S757. Phosphothreonine; by CDK1 is present on T759. Phosphoserine is present on residues S774 and S777. T784 bears the Phosphothreonine mark. 2 positions are modified to phosphoserine: S806 and S812. S830 carries the phosphoserine; by AURKA modification. S839 is modified (phosphoserine; by CDK1).

Belongs to the SAPAP family. In terms of assembly, interacts with CDK1. Interacts with the C-terminal proline-rich region of FBXO7. Recruited by FBXO7 to a SCF (SKP1-CUL1-F-box) protein complex in a CDK1/Cyclin B-phosphorylation dependent manner. Interacts with CDH1. In terms of processing, ubiquitinated, leading to its degradation. Post-translationally, decreased phosphorylation levels are associated with the differentiation of intestinal epithelial cells. Abundantly expressed in fetal liver. Expressed at lower levels in bone marrow, testis, colon, and placenta.

It is found in the nucleus. The protein localises to the cytoplasm. The protein resides in the cytoskeleton. Its subcellular location is the spindle. In terms of biological role, potential cell cycle regulator that may play a role in carcinogenesis of cancer cells. Mitotic phosphoprotein regulated by the ubiquitin-proteasome pathway. Key regulator of adherens junction integrity and differentiation that may be involved in CDH1-mediated adhesion and signaling in epithelial cells. This is Disks large-associated protein 5 (DLGAP5) from Homo sapiens (Human).